Consider the following 67-residue polypeptide: MRIHYLLFALLFLFLVPVPGHGGIINTLQKYYCRVRGGRCAVLTCLPKEEQIGKCSTRGRKCCRRKK.

The signal sequence occupies residues 1-22 (MRIHYLLFALLFLFLVPVPGHG). Disulfide bonds link cysteine 33-cysteine 62, cysteine 40-cysteine 55, and cysteine 45-cysteine 63.

Belongs to the beta-defensin family.

Its subcellular location is the secreted. Exhibits antimicrobial activity against Gram-positive and Gram-negative bacteria. The sequence is that of Beta-defensin 103A (DEFB103A) from Pan troglodytes (Chimpanzee).